Consider the following 333-residue polypeptide: Protein 2 (333 aa).

Disordered regions lie at residues 1-41 and 57-84; these read MTGR…SENA and LGAG…LPPT. Residues 24–33 are compositionally biased toward polar residues; it reads QETTKQTTSA. Acidic residues predominate over residues 62-79; the sequence is DYDETEADPADTYGDTEA.

The protein is Protein 2 of Lactuca sativa (Garden lettuce).